The primary structure comprises 367 residues: UDP-N-acetylenolpyruvoylglucosamine reductase 2 (367 aa).

The FAD-binding PCMH-type domain maps to 31–198 (IGGKPRSAVR…LAIELQLLTD (168 aa)). R176 is a catalytic residue. The Proton donor role is filled by S256. The active site involves E357.

The protein belongs to the MurB family. FAD is required as a cofactor.

It is found in the cytoplasm. The catalysed reaction is UDP-N-acetyl-alpha-D-muramate + NADP(+) = UDP-N-acetyl-3-O-(1-carboxyvinyl)-alpha-D-glucosamine + NADPH + H(+). It participates in cell wall biogenesis; peptidoglycan biosynthesis. Cell wall formation. In Corynebacterium glutamicum (strain ATCC 13032 / DSM 20300 / JCM 1318 / BCRC 11384 / CCUG 27702 / LMG 3730 / NBRC 12168 / NCIMB 10025 / NRRL B-2784 / 534), this protein is UDP-N-acetylenolpyruvoylglucosamine reductase 2 (murB2).